The sequence spans 359 residues: Protein Wnt-8a (359 aa).

An N-terminal signal peptide occupies residues M1–S25. C55 and C66 are joined by a disulfide. N104 is a glycosylation site (N-linked (GlcNAc...) asparagine). Disulfide bonds link C105-C113, C115-C133, C181-C195, C183-C190, C260-C298, C276-C291, C295-C337, C313-C328, C315-C325, and C320-C321. The O-palmitoleoyl serine moiety is linked to residue S187. N-linked (GlcNAc...) asparagine glycosylation is found at N263 and N282. The N-linked (GlcNAc...) asparagine glycan is linked to N348.

This sequence belongs to the Wnt family. Palmitoleoylation is required for efficient binding to frizzled receptors. Depalmitoleoylation leads to Wnt signaling pathway inhibition. In terms of processing, proteolytic processing by tiki1 and tiki2 promotes oxidation and formation of large disulfide-bond oligomers, leading to inactivation of wnt8. In terms of tissue distribution, expressed in the margin of the pregastrula embryo destined to be the future mesoderm.

It is found in the secreted. The protein resides in the extracellular space. It localises to the extracellular matrix. Its function is as follows. Ligand for members of the frizzled family of seven transmembrane receptors. Required for mesoderm and neural ectoderm patterning during gastrulation. Involved in axis formation during embryonic development, via activation of canonical Wnt/CTNNB1 signaling. May be involved in the specification of the spatial patterns of expression of Gsc and other regulatory genes leading to the establishment of the embryonic axis. The protein is Protein Wnt-8a (wnt8a) of Danio rerio (Zebrafish).